Here is a 141-residue protein sequence, read N- to C-terminus: Putative nickel-responsive regulator (141 aa).

Residues H80, H91, H93, and C99 each coordinate Ni(2+).

This sequence belongs to the transcriptional regulatory CopG/NikR family. Ni(2+) serves as cofactor.

Its function is as follows. Transcriptional regulator. In Methanococcus vannielii (strain ATCC 35089 / DSM 1224 / JCM 13029 / OCM 148 / SB), this protein is Putative nickel-responsive regulator.